Consider the following 137-residue polypeptide: Global transcriptional regulator Spx (137 aa).

Cys-10 and Cys-13 are disulfide-bonded.

This sequence belongs to the ArsC family. Spx subfamily. As to quaternary structure, interacts with the C-terminal domain of the alpha subunit of the RNAP.

It is found in the cytoplasm. Functionally, global transcriptional regulator that plays a key role in stress response and exerts either positive or negative regulation of genes. Acts by interacting with the C-terminal domain of the alpha subunit of the RNA polymerase (RNAP). This interaction can enhance binding of RNAP to the promoter region of target genes and stimulate their transcription, or block interaction of RNAP with activator. This is Global transcriptional regulator Spx from Streptococcus mutans serotype c (strain ATCC 700610 / UA159).